A 185-amino-acid polypeptide reads, in one-letter code: DNA-directed RNA polymerase 22 kDa subunit (185 aa).

This sequence belongs to the poxviridae DNA-directed RNA polymerase 22 kDa subunit family. The DNA-dependent RNA polymerase used for intermediate and late genes expression consists of eight subunits Rpo30/OPG66, Rpo7/OPG90, Rpo22/OPG103, Rpo147/OPG105, Rpo18/OPG119, Rpo19/OPG131, Rpo132/OPG151 and Rpo35/OPG156. The same holoenzyme, with the addition of the transcription-specificity factor OPG109, is used for early gene expression.

The protein localises to the virion. It carries out the reaction RNA(n) + a ribonucleoside 5'-triphosphate = RNA(n+1) + diphosphate. Part of the DNA-dependent RNA polymerase which catalyzes the transcription of viral DNA into RNA using the four ribonucleoside triphosphates as substrates. Responsible for the transcription of early, intermediate and late genes. DNA-dependent RNA polymerase associates with the early transcription factor (ETF), itself composed of OPG118 and OPG133, thereby allowing the early genes transcription. Late transcription, and probably also intermediate transcription, require newly synthesized RNA polymerase. This chain is DNA-directed RNA polymerase 22 kDa subunit (OPG103), found in Variola virus (isolate Human/India/Ind3/1967) (VARV).